A 1133-amino-acid polypeptide reads, in one-letter code: Eukaryotic translation initiation factor 3 subunit A (1133 aa).

The PCI domain occupies 317-498 (IQRMTSHVLI…HCVHFGTDLS (182 aa)). Coiled-coil stretches lie at residues 573-700 (KKIE…YFER) and 784-886 (EEER…EADS). A compositionally biased stretch (basic and acidic residues) spans 810-893 (KEEERRRAEE…ADSWRDRRGG (84 aa)). The tract at residues 810–1133 (KEEERRRAEE…DGWTDVKHHR (324 aa)) is disordered. Residues 895 to 909 (APAAAAQPNPAAQEA) are compositionally biased toward low complexity. 3 stretches are compositionally biased toward basic and acidic residues: residues 920 to 944 (GARE…RDVR), 954 to 1081 (VERR…DSAW), and 1097 to 1117 (TRQD…KEAR).

Belongs to the eIF-3 subunit A family. Component of the eukaryotic translation initiation factor 3 (eIF-3) complex.

Its subcellular location is the cytoplasm. Its function is as follows. RNA-binding component of the eukaryotic translation initiation factor 3 (eIF-3) complex, which is involved in protein synthesis of a specialized repertoire of mRNAs and, together with other initiation factors, stimulates binding of mRNA and methionyl-tRNAi to the 40S ribosome. The eIF-3 complex specifically targets and initiates translation of a subset of mRNAs involved in cell proliferation. The sequence is that of Eukaryotic translation initiation factor 3 subunit A from Aedes aegypti (Yellowfever mosquito).